The sequence spans 445 residues: UPF0210 protein SUB1511 (445 aa).

Belongs to the UPF0210 family. Homodimer.

This Streptococcus uberis (strain ATCC BAA-854 / 0140J) protein is UPF0210 protein SUB1511.